The following is a 489-amino-acid chain: Ribulose bisphosphate carboxylase large chain 2 (489 aa).

Asparagine 128 and threonine 178 together coordinate substrate. Lysine 180 acts as the Proton acceptor in catalysis. Lysine 182 lines the substrate pocket. Mg(2+) is bound by residues lysine 206, aspartate 208, and glutamate 209. Lysine 206 carries the post-translational modification N6-carboxylysine. Residue histidine 298 is the Proton acceptor of the active site. 3 residues coordinate substrate: arginine 299, histidine 331, and serine 383.

The protein belongs to the RuBisCO large chain family. Type I subfamily. As to quaternary structure, heterohexadecamer of 8 large chains and 8 small chains. Requires Mg(2+) as cofactor.

It carries out the reaction 2 (2R)-3-phosphoglycerate + 2 H(+) = D-ribulose 1,5-bisphosphate + CO2 + H2O. It catalyses the reaction D-ribulose 1,5-bisphosphate + O2 = 2-phosphoglycolate + (2R)-3-phosphoglycerate + 2 H(+). In terms of biological role, ruBisCO catalyzes two reactions: the carboxylation of D-ribulose 1,5-bisphosphate, the primary event in carbon dioxide fixation, as well as the oxidative fragmentation of the pentose substrate. Both reactions occur simultaneously and in competition at the same active site. This is Ribulose bisphosphate carboxylase large chain 2 from Nitrobacter winogradskyi (strain ATCC 25391 / DSM 10237 / CIP 104748 / NCIMB 11846 / Nb-255).